Here is a 304-residue protein sequence, read N- to C-terminus: Glutaminase (304 aa).

Residues serine 63, asparagine 114, glutamate 158, asparagine 165, tyrosine 189, tyrosine 240, and valine 258 each contribute to the substrate site.

The protein belongs to the glutaminase family. As to quaternary structure, homotetramer.

It carries out the reaction L-glutamine + H2O = L-glutamate + NH4(+). This chain is Glutaminase, found in Shewanella sp. (strain ANA-3).